Reading from the N-terminus, the 238-residue chain is Oxidoreductase dmxR7 (238 aa).

This sequence belongs to the avfA family.

It participates in secondary metabolite biosynthesis. Its function is as follows. Oxidoreductase; part of the gene cluster that mediates the biosynthesis of the dimeric xanthones cryptosporioptides. The pathway begins with the synthesis of atrochrysone thioester by the polyketide synthase dmx-nrPKS. The atrochrysone carboxyl ACP thioesterase dmxR1 then breaks the thioester bond and releases the atrochrysone carboxylic acid from dmx-nrPKS. Atrochrysone carboxylic acid is decarboxylated by the decarboxylase dmxR15, and oxidized by the anthrone oxygenase dmxR16 to yield emodin. Emodin is then reduced to emodin hydroquinone by the oxidoreductase dmxR7. A-ring reduction by the short chain dehydrogenase dmxR18, dehydration by the scytalone dehydratase-like protein dmxR17 and probable spontaneous re-oxidation, results in overall deoxygenation to chrysophanol. Baeyer-Villiger oxidation by the Baeyer-Villiger monooxygenase (BVMO) dmxR6 then yields monodictylactone in equilibrium with monodictyphenone. In the case of the cryptosporioptides biosynthesis, monodictylactone is reduced at C-12 to an alcohol (by the short chain dehydrogenases dmxR12 or dmxR8) and hydroxylated at C-5 by dmxR9, yielding the electron-rich aromatic which could eliminate H(2)O to form the ortho-quinonemethide, followed by tautomerisation to paraquinone and complete the formal reduction to produce the 10-methylgroup. Conjugate addition of C-4a-OH to the resulting paraquinone by the monooxygenase dmxR10 then gives cyclohexadienone, which is then reduced at C-5 by the short chain dehydrogenase dmxR3 to give the dihydroxanthone. The 6,7-epoxide in the cryptosporioptides could be introduced by the cytochrome P450 monooxygenase dmxL3. The highly reducing PKS dmxL2 manufactures butyrate, which is further carboxylated by dmxL1 to form ethylmalonate. It is not yet clear whether the carboxylation occurs while the butyrate is attached to the ACP of dmxL2, but this unusual fungal metabolite could then be esterified to O-5 by the O-acetyltransferase dmxR13. Finally, dimerization performed by dmxR5 gives the observed dimers cryptosporioptides A, B and C as the final products of the pathway. The chain is Oxidoreductase dmxR7 from Cryptosporiopsis sp. (strain 8999).